Consider the following 1478-residue polypeptide: Fanconi anemia group D2 protein homolog (1478 aa).

The segment at 33–53 (NISVESSSGGSEENIPASQEH) is disordered. A compositionally biased stretch (low complexity) spans 35–45 (SVESSSGGSEE). Lys-595 is covalently cross-linked (Glycyl lysine isopeptide (Lys-Gly) (interchain with G-Cter in ubiquitin)). Disordered regions lie at residues 896-918 (NQNQ…PEPD) and 1420-1478 (TPRS…SKCF). Acidic residues predominate over residues 1429–1442 (ENSDDELPADDTSV). A compositionally biased stretch (basic residues) spans 1468–1478 (RSKSSSRSKCF).

Belongs to the Fanconi anemia protein FANCD2 family. In terms of assembly, homodimer; cannot be ubiquitinated and does not bind DNA. Part of a Fanci-Fancd2 heterodimeric complex that binds and scans dsDNA for DNA damage. Interacts with Fancl (via C-terminus). In terms of processing, monoubiquitinated by Fancl in response to ionising radiation.

Its subcellular location is the nucleus. In terms of biological role, required for maintenance of chromosomal stability. Together with Fancl, and probably Fanci, involved in DNA repair of damage caused by agents that induce interstrand cross-links but not agents that cause double strand breaks. Required for S phase checkpoint activation in response to ionizing radiation induced DNA damage. This is Fanconi anemia group D2 protein homolog from Drosophila melanogaster (Fruit fly).